The primary structure comprises 445 residues: Phosphoglucosamine mutase (445 aa).

Ser102 functions as the Phosphoserine intermediate in the catalytic mechanism. Mg(2+)-binding residues include Ser102, Asp241, Asp243, and Asp245. Ser102 carries the phosphoserine modification.

This sequence belongs to the phosphohexose mutase family. Mg(2+) is required as a cofactor. In terms of processing, activated by phosphorylation.

The catalysed reaction is alpha-D-glucosamine 1-phosphate = D-glucosamine 6-phosphate. In terms of biological role, catalyzes the conversion of glucosamine-6-phosphate to glucosamine-1-phosphate. In Acinetobacter baumannii (strain SDF), this protein is Phosphoglucosamine mutase.